We begin with the raw amino-acid sequence, 184 residues long: Large ribosomal subunit protein uL6 (184 aa).

It belongs to the universal ribosomal protein uL6 family. As to quaternary structure, part of the 50S ribosomal subunit.

This protein binds to the 23S rRNA, and is important in its secondary structure. It is located near the subunit interface in the base of the L7/L12 stalk, and near the tRNA binding site of the peptidyltransferase center. This is Large ribosomal subunit protein uL6 from Cytophaga hutchinsonii (strain ATCC 33406 / DSM 1761 / CIP 103989 / NBRC 15051 / NCIMB 9469 / D465).